The chain runs to 341 residues: L-threonine 3-dehydrogenase (341 aa).

Residue C38 participates in Zn(2+) binding. Residues T40 and H43 each act as charge relay system in the active site. Zn(2+) contacts are provided by H63, E64, C93, C96, C99, and C107. NAD(+)-binding positions include I175, D195, R200, 262–264, and 286–287; these read LGI and IY.

Belongs to the zinc-containing alcohol dehydrogenase family. Homotetramer. Zn(2+) is required as a cofactor.

It is found in the cytoplasm. The enzyme catalyses L-threonine + NAD(+) = (2S)-2-amino-3-oxobutanoate + NADH + H(+). The protein operates within amino-acid degradation; L-threonine degradation via oxydo-reductase pathway; glycine from L-threonine: step 1/2. Its function is as follows. Catalyzes the NAD(+)-dependent oxidation of L-threonine to 2-amino-3-ketobutyrate. This Idiomarina loihiensis (strain ATCC BAA-735 / DSM 15497 / L2-TR) protein is L-threonine 3-dehydrogenase.